Here is a 287-residue protein sequence, read N- to C-terminus: uncharacterized protein (287 aa).

The region spanning 115–287 is the ATP-grasp domain; the sequence is PQNFDREWNP…NLAIELLKAI (173 aa). ATP-binding positions include K145 and 178–188; that span reads QKYITCSKGES. Positions 248, 261, and 263 each coordinate Mg(2+). 3 residues coordinate Mn(2+): D248, E261, and N263.

The protein belongs to the RimK family.

This is an uncharacterized protein from Mycoplasma genitalium (strain ATCC 33530 / DSM 19775 / NCTC 10195 / G37) (Mycoplasmoides genitalium).